A 94-amino-acid chain; its full sequence is Ig kappa-B5 chain V region 2699 (94 aa).

The interval 1 to 23 is framework-1; that stretch reads AFELTQTPSSVEAAVGGTVTINC. Positions 24 to 34 are complementarity-determining-1; the sequence is QASTDISSNLA. Positions 35 to 49 are framework-2; sequence WYTPKPGSPPKLLIY. The tract at residues 50-56 is complementarity-determining-2; the sequence is SASTLAS. The segment at 57–82 is framework-3; that stretch reads GVSSRFKGSGSGVLITLTISDLECGV. Position 83 (S83) is a region of interest, complementarity-determining-3. A framework-4 region spans residues 84 to 93; it reads FGGGTKVVVE.

The protein is Ig kappa-B5 chain V region 2699 of Oryctolagus cuniculus (Rabbit).